The following is a 122-amino-acid chain: SVVELGKMIIQETGKSPFPSYTSYGCFCGGGERGPPLDATDRCCLAHSCCYDTLPDCSPKTDRYKYKRENGEIICENSTSCKKRICECDKAVAVCLRKNLNTYNKKYTYYPNFWCKGDIEKC.

Disulfide bonds link cysteine 26–cysteine 115, cysteine 28–cysteine 44, cysteine 43–cysteine 95, cysteine 49–cysteine 122, cysteine 50–cysteine 88, cysteine 57–cysteine 81, and cysteine 75–cysteine 86. The segment at 105-117 (KKYTYYPNFWCKG) is important for membrane-damaging activities in eukaryotes and bacteria; heparin-binding.

Expressed by the venom gland.

Its subcellular location is the secreted. Its activity is regulated as follows. Suramin inhibits the myotoxic activity. Functionally, snake venom phospholipase A2 homolog that lacks enzymatic activity. Shows high myotoxin activities and displays edema-inducing activities. This chain is Basic phospholipase A2 homolog ecarpholin S, found in Echis carinatus (Saw-scaled viper).